Here is a 265-residue protein sequence, read N- to C-terminus: Phosphatidylglycerol--prolipoprotein diacylglyceryl transferase (265 aa).

Helical transmembrane passes span 17–37 (LAIR…IWLA), 59–79 (MLFY…VLFY), 94–114 (VWKG…AMSI), 123–143 (VLDV…FGRL), 177–197 (SPLY…WLFA), 204–224 (MAVG…TEYF), and 238–258 (ISAG…MLLI). Residue R142 coordinates a 1,2-diacyl-sn-glycero-3-phospho-(1'-sn-glycerol).

The protein belongs to the Lgt family.

The protein localises to the cell inner membrane. It carries out the reaction L-cysteinyl-[prolipoprotein] + a 1,2-diacyl-sn-glycero-3-phospho-(1'-sn-glycerol) = an S-1,2-diacyl-sn-glyceryl-L-cysteinyl-[prolipoprotein] + sn-glycerol 1-phosphate + H(+). It functions in the pathway protein modification; lipoprotein biosynthesis (diacylglyceryl transfer). Catalyzes the transfer of the diacylglyceryl group from phosphatidylglycerol to the sulfhydryl group of the N-terminal cysteine of a prolipoprotein, the first step in the formation of mature lipoproteins. This Janthinobacterium sp. (strain Marseille) (Minibacterium massiliensis) protein is Phosphatidylglycerol--prolipoprotein diacylglyceryl transferase.